We begin with the raw amino-acid sequence, 307 residues long: Probable E3 SUMO-protein ligase RNF212 (307 aa).

The RING-type zinc-finger motif lies at 7–46 (CNRCFQSPHRKSSFSLTSCGHVYCHSCLLKGTKNECVICQ). Positions 91-124 (RRRLVAFYQEKISQLEESLRKSVLQIKQLQSMRS) form a coiled coil. A disordered region spans residues 164-291 (LTPPARKPEM…KMSPFLPSTP (128 aa)). 3 stretches are compositionally biased toward polar residues: residues 202 to 213 (LSLTPSHASMTK), 233 to 252 (SQLS…SSWT), and 259 to 271 (ISIS…QCAG).

As to expression, specifically expressed in meiocytes of the gonads.

The protein localises to the nucleus. The protein resides in the chromosome. The protein operates within protein modification; protein sumoylation. SUMO E3 ligase that acts as a regulator of crossing-over during meiosis: required to couple chromosome synapsis to the formation of crossover-specific recombination complexes. Localizes to recombination sites and stabilizes meiosis-specific recombination factors, such as MutS-gamma complex proteins (MSH4 and MSH5) and TEX11. May mediate sumoylation of target proteins MSH4 and/or MSH5, leading to enhance their binding to recombination sites. Acts as a limiting factor for crossover designation and/or reinforcement and plays an antagonist role with CCNB1IP1/HEI10 in the regulation of meiotic recombination. This Mus musculus (Mouse) protein is Probable E3 SUMO-protein ligase RNF212 (Rnf212).